The primary structure comprises 120 residues: C-C motif chemokine 2 (120 aa).

The first 23 residues, 1-23 (MQRSSVLLCLLVIEATFCSLLMA), serve as a signal peptide directing secretion. Gln24 is subject to Pyrrolidone carboxylic acid. 2 disulfide bridges follow: Cys33/Cys57 and Cys34/Cys73. Residues 91 to 120 (RTQQKQNSTAPQTSKPLNIRFTTQDPKNRS) are disordered. The span at 93–120 (QQKQNSTAPQTSKPLNIRFTTQDPKNRS) shows a compositional bias: polar residues. Asn97 carries an N-linked (GlcNAc...) asparagine glycan.

This sequence belongs to the intercrine beta (chemokine CC) family. As to quaternary structure, monomer or homodimer; in equilibrium. Is tethered on endothelial cells by glycosaminoglycan (GAG) side chains of proteoglycans. Interacts with TNFAIP6 (via Link domain). In terms of processing, processing at the N-terminus can regulate receptor and target cell selectivity. Deletion of the N-terminal residue converts it from an activator of basophil to an eosinophil chemoattractant. N-Glycosylated.

It is found in the secreted. Functionally, acts as a ligand for C-C chemokine receptor CCR2. Signals through binding and activation of CCR2 and induces a strong chemotactic response and mobilization of intracellular calcium ions. Exhibits a chemotactic activity for monocytes and basophils but not neutrophils or eosinophils. Plays an important role in mediating peripheral nerve injury-induced neuropathic pain. Increases NMDA-mediated synaptic transmission in both dopamine D1 and D2 receptor-containing neurons, which may be caused by MAPK/ERK-dependent phosphorylation of GRIN2B/NMDAR2B. This is C-C motif chemokine 2 (CCL2) from Cavia porcellus (Guinea pig).